The primary structure comprises 456 residues: NADH-quinone oxidoreductase subunit N (456 aa).

The next 14 helical transmembrane spans lie at 6 to 26 (LFAL…MLLA), 45 to 65 (VAAL…GALF), 75 to 95 (TAYA…AGVA), 97 to 117 (EAPA…GAGH), 118 to 138 (AATL…LFAF), 151 to 171 (FLVM…LIYA), 181 to 201 (WVGH…GLAF), 220 to 240 (PAGA…IAIL), 252 to 272 (LWSA…NVLA), 281 to 301 (MLGY…ASGA), 308 to 328 (VLFY…ASAM), 355 to 375 (GLLS…LYLF), 382 to 402 (ESWI…YYYI), and 426 to 446 (LLLI…LVLI).

Belongs to the complex I subunit 2 family. In terms of assembly, NDH-1 is composed of 14 different subunits. Subunits NuoA, H, J, K, L, M, N constitute the membrane sector of the complex.

It localises to the cell inner membrane. The enzyme catalyses a quinone + NADH + 5 H(+)(in) = a quinol + NAD(+) + 4 H(+)(out). In terms of biological role, NDH-1 shuttles electrons from NADH, via FMN and iron-sulfur (Fe-S) centers, to quinones in the respiratory chain. The immediate electron acceptor for the enzyme in this species is believed to be ubiquinone. Couples the redox reaction to proton translocation (for every two electrons transferred, four hydrogen ions are translocated across the cytoplasmic membrane), and thus conserves the redox energy in a proton gradient. The sequence is that of NADH-quinone oxidoreductase subunit N from Rhodopseudomonas palustris (strain BisA53).